Here is a 205-residue protein sequence, read N- to C-terminus: Probable GTP-binding protein EngB (205 aa).

Residues 22–198 (HLPEYAFIGR…LSYIDEVNQD (177 aa)) form the EngB-type G domain. Residues 30–37 (GRSNVGKS), 57–61 (GKTQL), 75–78 (DLPG), 142–145 (TKAD), and 177–179 (TSA) each bind GTP. Residues Ser37 and Thr59 each contribute to the Mg(2+) site.

It belongs to the TRAFAC class TrmE-Era-EngA-EngB-Septin-like GTPase superfamily. EngB GTPase family. Requires Mg(2+) as cofactor.

Functionally, necessary for normal cell division and for the maintenance of normal septation. In Flavobacterium psychrophilum (strain ATCC 49511 / DSM 21280 / CIP 103535 / JIP02/86), this protein is Probable GTP-binding protein EngB.